We begin with the raw amino-acid sequence, 500 residues long: Maturase K (500 aa).

Belongs to the intron maturase 2 family. MatK subfamily.

Its subcellular location is the plastid. The protein resides in the chloroplast. Its function is as follows. Usually encoded in the trnK tRNA gene intron. Probably assists in splicing its own and other chloroplast group II introns. The sequence is that of Maturase K from Helianthus annuus (Common sunflower).